Here is a 204-residue protein sequence, read N- to C-terminus: MESWLIPAAPVTVVEEIKKSRFITMLAHTDGVEAAKAFVESVRAEHPDARHHCVAWVAGAPDDSQQLGFSDDGEPAGTAGKPMLAQLMGSGVGEITAVVVRYYGGILLGTGGLVKAYGGGVNQALRQLTTQRKTPLTEYTLQCEYHQLTGIEALLGQCDGKIINSDYQAFVLLRVALPAAKVAEFSAKLADFSRGSLQLLAIEE.

The protein belongs to the IMPACT family. In terms of assembly, monomer.

This chain is IMPACT family member YigZ (yigZ), found in Escherichia coli (strain K12).